The chain runs to 417 residues: Probable secreted aspartic protease ARB_07536 (417 aa).

The first 20 residues, 1 to 20 (MRGILILVALGAATIPQASA), serve as a signal peptide directing secretion. Positions 42 to 413 (NTDLVTIGTP…DFEKNRVGLA (372 aa)) constitute a Peptidase A1 domain. N-linked (GlcNAc...) asparagine glycans are attached at residues Asn74, Asn91, Asn100, Asn170, Asn276, and Asn314. Residues Cys333 and Cys373 are joined by a disulfide bond.

This sequence belongs to the peptidase A1 family.

The protein localises to the secreted. Functionally, probable secreted aspartic protease that supplies the fungus with nutrient amino acids. May be able to degrade the selected host's proteins involved in the immune defense. In Arthroderma benhamiae (strain ATCC MYA-4681 / CBS 112371) (Trichophyton mentagrophytes), this protein is Probable secreted aspartic protease ARB_07536.